Here is a 337-residue protein sequence, read N- to C-terminus: Hsp90 co-chaperone Cdc37-like 1 (337 aa).

A compositionally biased stretch (pro residues) spans 1-11 (MEQPWPPPGPW). The tract at residues 1 to 42 (MEQPWPPPGPWSLPRAEGEAEEENDLDVFPSSPRCPQLPGGS) is disordered. Residues 2–171 (EQPWPPPGPW…YEQKIRHFGM (170 aa)) are self-association. Phosphoserine is present on residues Ser-32 and Ser-88. Positions 85–122 (NSESLDQEHAKAQIAVSELRQREEEWRQKEEALVQREK) form a coiled coil. Residues 147–277 (KDTEDEDKSE…SRVRLYSQSQ (131 aa)) form a self-association and interaction with Hsp90 region. The tract at residues 267–337 (KSRVRLYSQS…DDEPKMMDTV (71 aa)) is interaction with Hsp70. The segment at 278–337 (SFQPMTVQNHVPHSGVGSIGLLESLPQNPDYLQYSINTALCSLNSVVHKEDDEPKMMDTV) is required for interaction with STIP1.

Belongs to the CDC37 family. In terms of assembly, self-associates. Forms complexes with Hsp70 and Hsp90. Interacts with CDC37, FKBP4, PPID and STIP1.

The protein resides in the cytoplasm. Co-chaperone that binds to numerous proteins and promotes their interaction with Hsp70 and Hsp90. This is Hsp90 co-chaperone Cdc37-like 1 (CDC37L1) from Pongo abelii (Sumatran orangutan).